A 714-amino-acid polypeptide reads, in one-letter code: Fimbrin-3 (714 aa).

The EF-hand domain occupies 7–55 (VIVSDPWLQSQLTQVELRSLNSKFVALKNQSGKVTLEDLPSVLVKVKSL). Calponin-homology (CH) domains are found at residues 124–241 (QSEK…KIQL), 269–372 (LPPE…HERN), 393–499 (CRDE…RTHM), and 514–622 (DMTD…YWSL). Actin-binding regions lie at residues 124-372 (QSEK…HERN) and 393-622 (CRDE…YWSL). Residues 628–662 (SSESSSSSSDSSSTHSTTTTCTSTCTSTDASPAPS) show a composition bias toward low complexity. A disordered region spans residues 628–694 (SSESSSSSSD…NEVSSLTIEE (67 aa)). A compositionally biased stretch (polar residues) spans 670–680 (SSLNGEVSSLT). Positions 681–694 (IEEDNEVSSLTIEE) are enriched in acidic residues.

In terms of assembly, interacts with F-actin.

It is found in the cytoplasm. The protein localises to the cytoskeleton. Cross-links actin filaments (F-actin). Stabilizes and prevents F-actin depolymerization mediated by profilin. May regulate actin cytoarchitecture, cell cycle, cell division, cell elongation and cytoplasmic tractus. This Arabidopsis thaliana (Mouse-ear cress) protein is Fimbrin-3.